The following is a 217-amino-acid chain: uncharacterized protein (217 aa).

The first 24 residues, 1 to 24 (MRYTVLIALQGALLLLLLIDDGQG), serve as a signal peptide directing secretion.

This is an uncharacterized protein from Aedes vexans (Inland floodwater mosquito).